A 331-amino-acid chain; its full sequence is Probable inactive O-methyltransferase 11 (331 aa).

S-adenosyl-L-methionine contacts are provided by residues Gly179, Asp202, Gly224–Phe226, Asp225, Phe226, and Lys239.

It belongs to the class I-like SAM-binding methyltransferase superfamily. Cation-independent O-methyltransferase family. COMT subfamily.

The chain is Probable inactive O-methyltransferase 11 (omt11) from Dictyostelium discoideum (Social amoeba).